The following is a 340-amino-acid chain: 4-hydroxythreonine-4-phosphate dehydrogenase (340 aa).

2 residues coordinate substrate: His-141 and Thr-142. A divalent metal cation is bound by residues His-177, His-222, and His-277. Lys-285, Asn-294, and Arg-303 together coordinate substrate.

The protein belongs to the PdxA family. As to quaternary structure, homodimer. It depends on Zn(2+) as a cofactor. Mg(2+) is required as a cofactor. Co(2+) serves as cofactor.

It is found in the cytoplasm. The enzyme catalyses 4-(phosphooxy)-L-threonine + NAD(+) = 3-amino-2-oxopropyl phosphate + CO2 + NADH. It participates in cofactor biosynthesis; pyridoxine 5'-phosphate biosynthesis; pyridoxine 5'-phosphate from D-erythrose 4-phosphate: step 4/5. In terms of biological role, catalyzes the NAD(P)-dependent oxidation of 4-(phosphooxy)-L-threonine (HTP) into 2-amino-3-oxo-4-(phosphooxy)butyric acid which spontaneously decarboxylates to form 3-amino-2-oxopropyl phosphate (AHAP). The protein is 4-hydroxythreonine-4-phosphate dehydrogenase of Maricaulis maris (strain MCS10) (Caulobacter maris).